The chain runs to 515 residues: MGHNSSWVSPNTSHPRNTSGAEAGANLSAFGELSEAQLYRQFTTTVQVVIFIGSLLGNFMVLWSTCRTTVFKSVTNRFIKNLACSGICASVVCVPFDIILSSSPHCCWWIYTMLFCKVLKFLHKVFCSVTVLSFPAIALDRYYSVLYPLERKISDAKSRELVMYIWAHAVVASVPVFAVTNVADIYAMSTCTEVWSNSLGHLVYVLIYNVTTVIVPVAVVFLFLILIRRALSASQKKKVIIAALRTPQNTISIPYASQREAELHATLLSMVTVFILCSVPYATLVVYQTVLNVPNTSVFLLLTAIWLPKVSLLANPVLFLTVNKSVRKCLVGTLVQLHHRYSRRNVVSTGSGVAEPSLEPSMRSGSQLLEMFHIGQQQIFKPSEDEEESEAKYLGSADFQAKEVLTSCPEGEQEPPQLAPSVPPPGTVDSEPRVSPVAPMESGIFPDKYSLQFGFGPFELPPQWLSETRNSKKRLLPPLGNTPEELIQTKVPRVNRVERKMSRNNKVSIFPKVDS.

Residues 1–41 (MGHNSSWVSPNTSHPRNTSGAEAGANLSAFGELSEAQLYRQ) are Extracellular-facing. Asn4, Asn11, Asn17, and Asn26 each carry an N-linked (GlcNAc...) asparagine glycan. The chain crosses the membrane as a helical span at residues 42–64 (FTTTVQVVIFIGSLLGNFMVLWS). Topologically, residues 65–77 (TCRTTVFKSVTNR) are cytoplasmic. Residues 78–98 (FIKNLACSGICASVVCVPFDI) traverse the membrane as a helical segment. The Extracellular segment spans residues 99 to 108 (ILSSSPHCCW). Residues 109–129 (WIYTMLFCKVLKFLHKVFCSV) form a helical membrane-spanning segment. Residues 130–157 (TVLSFPAIALDRYYSVLYPLERKISDAK) lie on the Cytoplasmic side of the membrane. Residues 158–177 (SRELVMYIWAHAVVASVPVF) form a helical membrane-spanning segment. At 178-204 (AVTNVADIYAMSTCTEVWSNSLGHLVY) the chain is on the extracellular side. The helical transmembrane segment at 205–225 (VLIYNVTTVIVPVAVVFLFLI) threads the bilayer. At 226–264 (LIRRALSASQKKKVIIAALRTPQNTISIPYASQREAELH) the chain is on the cytoplasmic side. A helical transmembrane segment spans residues 265-285 (ATLLSMVTVFILCSVPYATLV). Topologically, residues 286 to 301 (VYQTVLNVPNTSVFLL) are extracellular. A helical transmembrane segment spans residues 302 to 322 (LTAIWLPKVSLLANPVLFLTV). Residues 323–515 (NKSVRKCLVG…KVSIFPKVDS (193 aa)) lie on the Cytoplasmic side of the membrane. Residues 407 to 435 (SCPEGEQEPPQLAPSVPPPGTVDSEPRVS) form a disordered region. Over residues 417 to 426 (QLAPSVPPPG) the composition is skewed to pro residues.

The protein belongs to the G-protein coupled receptor 1 family. Expressed mainly in the brain, with prominent expression in the SCN (at protein level).

Its subcellular location is the cell membrane. Orphan receptor involved in normal circadian rhythm behavior. Acts through the G-protein subclass G(z)-alpha and has an agonist-independent basal activity to repress cAMP production. The polypeptide is G-protein coupled receptor 176 (Gpr176) (Mus musculus (Mouse)).